Reading from the N-terminus, the 113-residue chain is Small ribosomal subunit protein uS17 (113 aa).

The protein belongs to the universal ribosomal protein uS17 family. As to quaternary structure, part of the 30S ribosomal subunit.

Its function is as follows. One of the primary rRNA binding proteins, it binds specifically to the 5'-end of 16S ribosomal RNA. This is Small ribosomal subunit protein uS17 from Pyrococcus furiosus (strain ATCC 43587 / DSM 3638 / JCM 8422 / Vc1).